Reading from the N-terminus, the 634-residue chain is ATP-dependent clpX-like chaperone, mitochondrial (634 aa).

The N-terminal 56 residues, 1 to 56 (MSSCGACTCGAAAARLLTTSLTSAQRGISCGRIHVPVLGRLGTTLDAQALRRAPLR), are a transit peptide targeting the mitochondrion. The segment at 69–102 (DGANKDGSGDGNKKSVTEGSSKKSGSGNSGKGGN) is disordered. Positions 70 to 84 (GANKDGSGDGNKKSV) are enriched in basic and acidic residues. The span at 85–94 (TEGSSKKSGS) shows a compositional bias: low complexity. One can recognise a ClpX-type ZB domain in the interval 94-147 (SGNSGKGGNQLRCPKCGDLCTHVETFVSSTRFVKCEKCHHFFVVLSEADSKKSI). Cysteine 106, cysteine 109, cysteine 128, and cysteine 131 together coordinate Zn(2+). 295–302 (PTGSGKTL) serves as a coordination point for ATP. Lysine 438 carries the N6-acetyllysine modification. Positions 599-611 (KEPGYIRAPSKES) are enriched in basic and acidic residues. Residues 599-634 (KEPGYIRAPSKESSEEEYDSGVEEDGWPRQADAANS) are disordered. The segment covering 612–623 (SEEEYDSGVEED) has biased composition (acidic residues). Serine 618 is subject to Phosphoserine.

Belongs to the ClpX chaperone family. As to quaternary structure, homohexamer that forms a ring structure; this hexamerization requires ATP binding. Component of the ClpXP complex formed by the assembly of two CLPP heptameric rings with two CLPX hexameric rings, giving rise to a symmetrical structure with two central CLPP rings flanked by a CLPX ring at either end of the complex. Interacts with TFAM. As to expression, detected in liver (at protein level).

The protein resides in the mitochondrion. It localises to the mitochondrion matrix. It is found in the mitochondrion nucleoid. It carries out the reaction ATP + H2O = ADP + phosphate + H(+). ATP-dependent chaperone that functions as an unfoldase. As part of the ClpXP protease complex, it recognizes specific protein substrates, unfolds them using energy derived from ATP hydrolysis, and then translocates them to the proteolytic subunit (CLPP) of the ClpXP complex for degradation. Thanks to its chaperone activity, it also functions in the incorporation of the pyridoxal phosphate cofactor into 5-aminolevulinate synthase, thereby activating 5-aminolevulinate (ALA) synthesis, the first step in heme biosynthesis. This chaperone is also involved in the control of mtDNA nucleoid distribution, by regulating mitochondrial transcription factor A (TFAM) activity. The chain is ATP-dependent clpX-like chaperone, mitochondrial from Mus musculus (Mouse).